The primary structure comprises 278 residues: Cyclin-C (278 aa).

In terms of domain architecture, Cyclin N-terminal spans 41–139; sequence NVIQALGEHL…ILECEFYLLE (99 aa). The segment at 247 to 278 is disordered; sequence TILSKMPKPKPPPNSEGEQGPNGSQNSSYSQS. Residues 267–278 are compositionally biased toward polar residues; sequence PNGSQNSSYSQS. Phosphoserine is present on S270.

The protein belongs to the cyclin family. Cyclin C subfamily. As to quaternary structure, component of the Mediator complex, which is composed of MED1, MED4, MED6, MED7, MED8, MED9, MED10, MED11, MED12, MED13, MED13L, MED14, MED15, MED16, MED17, MED18, MED19, MED20, MED21, MED22, MED23, MED24, MED25, MED26, MED27, MED29, MED30, MED31, CCNC, CDK8 and CDC2L6/CDK11. The MED12, MED13, CCNC and CDK8 subunits form a distinct module termed the CDK8 module. Mediator containing the CDK8 module is less active than Mediator lacking this module in supporting transcriptional activation. Individual preparations of the Mediator complex lacking one or more distinct subunits have been variously termed ARC, CRSP, DRIP, PC2, SMCC and TRAP. The cylin/CDK pair formed by CCNC/CDK8 also associates with the large subunit of RNA polymerase II.

The protein localises to the nucleus. Its function is as follows. Component of the Mediator complex, a coactivator involved in regulated gene transcription of nearly all RNA polymerase II-dependent genes. Mediator functions as a bridge to convey information from gene-specific regulatory proteins to the basal RNA polymerase II transcription machinery. Mediator is recruited to promoters by direct interactions with regulatory proteins and serves as a scaffold for the assembly of a functional preinitiation complex with RNA polymerase II and the general transcription factors. Binds to and activates cyclin-dependent kinase CDK8 that phosphorylates the CTD (C-terminal domain) of the large subunit of RNA polymerase II (RNAp II), which may inhibit the formation of a transcription initiation complex. The sequence is that of Cyclin-C (Ccnc) from Rattus norvegicus (Rat).